Consider the following 367-residue polypeptide: tRNA-specific 2-thiouridylase MnmA (367 aa).

Residues 11-18 and Met-37 each bind ATP; that span reads AMSGGVDS. The segment at 97-99 is interaction with target base in tRNA; the sequence is NPD. Cys-102 serves as the catalytic Nucleophile. Cys-102 and Cys-199 are disulfide-bonded. Gly-127 provides a ligand contact to ATP. An interaction with tRNA region spans residues 149 to 151; the sequence is KDQ. Cys-199 acts as the Cysteine persulfide intermediate in catalysis. Residues 311–312 are interaction with tRNA; sequence RY.

The protein belongs to the MnmA/TRMU family. In terms of assembly, interacts with TusE.

It is found in the cytoplasm. The enzyme catalyses S-sulfanyl-L-cysteinyl-[protein] + uridine(34) in tRNA + AH2 + ATP = 2-thiouridine(34) in tRNA + L-cysteinyl-[protein] + A + AMP + diphosphate + H(+). Its function is as follows. Catalyzes the 2-thiolation of uridine at the wobble position (U34) of tRNA(Lys), tRNA(Glu) and tRNA(Gln), leading to the formation of s(2)U34, the first step of tRNA-mnm(5)s(2)U34 synthesis. Sulfur is provided by IscS, via a sulfur-relay system. Binds ATP and its substrate tRNAs. This Buchnera aphidicola subsp. Schizaphis graminum (strain Sg) protein is tRNA-specific 2-thiouridylase MnmA.